We begin with the raw amino-acid sequence, 152 residues long: SsrA-binding protein (152 aa).

This sequence belongs to the SmpB family.

The protein localises to the cytoplasm. Required for rescue of stalled ribosomes mediated by trans-translation. Binds to transfer-messenger RNA (tmRNA), required for stable association of tmRNA with ribosomes. tmRNA and SmpB together mimic tRNA shape, replacing the anticodon stem-loop with SmpB. tmRNA is encoded by the ssrA gene; the 2 termini fold to resemble tRNA(Ala) and it encodes a 'tag peptide', a short internal open reading frame. During trans-translation Ala-aminoacylated tmRNA acts like a tRNA, entering the A-site of stalled ribosomes, displacing the stalled mRNA. The ribosome then switches to translate the ORF on the tmRNA; the nascent peptide is terminated with the 'tag peptide' encoded by the tmRNA and targeted for degradation. The ribosome is freed to recommence translation, which seems to be the essential function of trans-translation. This chain is SsrA-binding protein, found in Rickettsia bellii (strain RML369-C).